The primary structure comprises 249 residues: Ubiquinone/menaquinone biosynthesis C-methyltransferase UbiE (249 aa).

S-adenosyl-L-methionine contacts are provided by residues T72, D93, and 121-122 (DA).

It belongs to the class I-like SAM-binding methyltransferase superfamily. MenG/UbiE family.

It catalyses the reaction a 2-demethylmenaquinol + S-adenosyl-L-methionine = a menaquinol + S-adenosyl-L-homocysteine + H(+). The enzyme catalyses a 2-methoxy-6-(all-trans-polyprenyl)benzene-1,4-diol + S-adenosyl-L-methionine = a 5-methoxy-2-methyl-3-(all-trans-polyprenyl)benzene-1,4-diol + S-adenosyl-L-homocysteine + H(+). Its pathway is quinol/quinone metabolism; menaquinone biosynthesis; menaquinol from 1,4-dihydroxy-2-naphthoate: step 2/2. It participates in cofactor biosynthesis; ubiquinone biosynthesis. Methyltransferase required for the conversion of demethylmenaquinol (DMKH2) to menaquinol (MKH2) and the conversion of 2-polyprenyl-6-methoxy-1,4-benzoquinol (DDMQH2) to 2-polyprenyl-3-methyl-6-methoxy-1,4-benzoquinol (DMQH2). This chain is Ubiquinone/menaquinone biosynthesis C-methyltransferase UbiE, found in Cellvibrio japonicus (strain Ueda107) (Pseudomonas fluorescens subsp. cellulosa).